A 547-amino-acid polypeptide reads, in one-letter code: Probable high-affinity hexose transporter ght8, mitochondrial (547 aa).

A mitochondrion-targeting transit peptide spans 1-21; the sequence is MGKTLTIVMLVFVSMAGWMFG. The Mitochondrial intermembrane portion of the chain corresponds to 22–86; the sequence is ADTGSIGGIT…SPLMDRIGKR (65 aa). Residues 87–107 form a helical membrane-spanning segment; the sequence is VSIMFWTIVYLIGIILQVTAV. Residues 108–112 are Cytoplasmic-facing; that stretch reads PSWVQ. A helical transmembrane segment spans residues 113 to 133; the sequence is IMVAKIWTGLAIGALSVLAPG. At 134-144 the chain is on the mitochondrial intermembrane side; sequence FQSEVAPATLR. The helical transmembrane segment at 145–165 threads the bilayer; it reads GTIVTTYQLAVTGGIFIAACI. Residues 166–179 lie on the Cytoplasmic side of the membrane; the sequence is NMGTHKLHKTAQWR. A helical membrane pass occupies residues 180–200; the sequence is VSMGINLLWGIIMFIGISFLP. Residues 201-304 lie on the Mitochondrial intermembrane side of the membrane; that stretch reads ESPRYLIAIG…TGMNSPYLSA (104 aa). A helical transmembrane segment spans residues 305–325; that stretch reads LILDAVNFGCTFGGLFVLEFF. Over 326 to 328 the chain is Cytoplasmic; the sequence is GRR. The helical transmembrane segment at 329–349 threads the bilayer; it reads MPLIIGGVWQSITFFIYAAVG. Topologically, residues 350-363 are mitochondrial intermembrane; the sequence is NRALTRKNGTSNHR. Residues 364–384 traverse the membrane as a helical segment; it reads AGAVMIVFSCLFIFSFAQTWG. At 385-404 the chain is on the cytoplasmic side; it reads PAAYVIVGESYPIRYRSKCA. A helical membrane pass occupies residues 405–425; it reads AVATTGNWLWGFLITFFTPFI. The Mitochondrial intermembrane portion of the chain corresponds to 426–432; sequence SDSIGFK. Residues 433–453 form a helical membrane-spanning segment; that stretch reads YGYIFAACNLCAACIIFLFAH. The Cytoplasmic portion of the chain corresponds to 454-547; sequence ETKGLTLEEI…NYVDEQDRYA (94 aa). The interval 482–547 is disordered; the sequence is GQAAKQQQEV…NYVDEQDRYA (66 aa). The segment covering 517–529 has biased composition (low complexity); that stretch reads TSSNDITSSTSSS. A Phosphoserine modification is found at Ser-519. Residues Thr-523 and Thr-526 each carry the phosphothreonine modification. Residues Ser-527, Ser-528, Ser-529, and Ser-537 each carry the phosphoserine modification.

The protein belongs to the major facilitator superfamily. Sugar transporter (TC 2.A.1.1) family.

The protein localises to the mitochondrion membrane. This chain is Probable high-affinity hexose transporter ght8, mitochondrial (ght8), found in Schizosaccharomyces pombe (strain 972 / ATCC 24843) (Fission yeast).